The following is a 465-amino-acid chain: Phenylalanine--tRNA ligase alpha subunit (465 aa).

Thr311 and Phe389 together coordinate L-phenylalanine. Glu391 is a Mg(2+) binding site.

The protein belongs to the class-II aminoacyl-tRNA synthetase family. Phe-tRNA synthetase alpha subunit type 2 subfamily. In terms of assembly, tetramer of two alpha and two beta subunits. Requires Mg(2+) as cofactor.

Its subcellular location is the cytoplasm. It carries out the reaction tRNA(Phe) + L-phenylalanine + ATP = L-phenylalanyl-tRNA(Phe) + AMP + diphosphate + H(+). The protein is Phenylalanine--tRNA ligase alpha subunit of Metallosphaera sedula (strain ATCC 51363 / DSM 5348 / JCM 9185 / NBRC 15509 / TH2).